The following is a 291-amino-acid chain: Bifunctional protein FolD (291 aa).

Residues 171-173 (GVS) and Ile-239 contribute to the NADP(+) site.

This sequence belongs to the tetrahydrofolate dehydrogenase/cyclohydrolase family. In terms of assembly, homodimer.

It carries out the reaction (6R)-5,10-methylene-5,6,7,8-tetrahydrofolate + NADP(+) = (6R)-5,10-methenyltetrahydrofolate + NADPH. The catalysed reaction is (6R)-5,10-methenyltetrahydrofolate + H2O = (6R)-10-formyltetrahydrofolate + H(+). It functions in the pathway one-carbon metabolism; tetrahydrofolate interconversion. Its function is as follows. Catalyzes the oxidation of 5,10-methylenetetrahydrofolate to 5,10-methenyltetrahydrofolate and then the hydrolysis of 5,10-methenyltetrahydrofolate to 10-formyltetrahydrofolate. The chain is Bifunctional protein FolD from Xylella fastidiosa (strain Temecula1 / ATCC 700964).